The sequence spans 502 residues: MSGCCCSRKCPSLPAISLCSTEVSCGGPVCLPSSCRSQTWQLVTCEDSCGSSGCGSQCCQPSCSVSSCCQPVCCEATICEPSCSVSSCAQPVCCEATICEPSCSMGSCCQPVCCEATICEPSCSVSTCAQPVCCEATMCQPSCSVSSCQPVCCETSSCQPVLCLPATCQPVICKPCCCQPVICEPSCCSAVCAVPASCQPMICEPVVCEPACCQPVCPTPSCCPSVCSAASSCQPVGCETSPCEPPCSEASACQPSACMALVCEPVCLRPVCCVQGPCEPPCVSSSCQDSSCCVSSICQPVCPEPSPCLPSVCVPTPCQPSCYIVKRCRSVSCEPISCPSPSCQPACCRPGSSASAICQPACPPRTFYIPSSCKPPCSPVSCRPICRPICSGPITFRQPYVTSITYRPACYRSCYSILRRPTCLASYSYRPVCSRQPCTDSDNDKCDSKKPTSSQPDCADSTPVKTEVSDETPCQPSEIKPASPITREAAAPQPAASKPADR.

Repeat copies occupy residues 4 to 8, 58 to 62, 73 to 77, 93 to 97, 108 to 112, 113 to 117, 133 to 137, 152 to 156, 177 to 181, 187 to 191, 212 to 216, 222 to 226, 272 to 276, 292 to 296, and 347 to 351. The segment at 73–307 is 15 X 5 AA repeats of C-C-X(3); sequence CCEATICEPS…CQPVCPEPSP (235 aa). Residues 435 to 502 form a disordered region; that stretch reads RQPCTDSDND…QPAASKPADR (68 aa). Low complexity predominate over residues 489–502; it reads AAAPQPAASKPADR.

It belongs to the KRTAP type 16 family. Interacts with hair keratins.

Functionally, in the hair cortex, hair keratin intermediate filaments are embedded in an interfilamentous matrix, consisting of hair keratin-associated proteins (KRTAP), which are essential for the formation of a rigid and resistant hair shaft through their extensive disulfide bond cross-linking with abundant cysteine residues of hair keratins. The matrix proteins include the high-sulfur and high-glycine-tyrosine keratins. This Mus musculus (Mouse) protein is Keratin-associated protein 16-1 (Krtap16-1).